The chain runs to 216 residues: Orotate phosphoribosyltransferase (216 aa).

Lysine 30 is a binding site for 5-phospho-alpha-D-ribose 1-diphosphate. Residue 38–39 (FF) coordinates orotate. Residues 75–76 (YK), arginine 102, lysine 103, lysine 106, histidine 108, and 128–136 (DDVITAGTA) contribute to the 5-phospho-alpha-D-ribose 1-diphosphate site. The orotate site is built by threonine 132 and arginine 160.

The protein belongs to the purine/pyrimidine phosphoribosyltransferase family. PyrE subfamily. As to quaternary structure, homodimer. It depends on Mg(2+) as a cofactor.

The catalysed reaction is orotidine 5'-phosphate + diphosphate = orotate + 5-phospho-alpha-D-ribose 1-diphosphate. Its pathway is pyrimidine metabolism; UMP biosynthesis via de novo pathway; UMP from orotate: step 1/2. Catalyzes the transfer of a ribosyl phosphate group from 5-phosphoribose 1-diphosphate to orotate, leading to the formation of orotidine monophosphate (OMP). The polypeptide is Orotate phosphoribosyltransferase (Acinetobacter baumannii (strain ACICU)).